A 779-amino-acid chain; its full sequence is Lon protease (779 aa).

The 194-residue stretch at Leu10–Arg203 folds into the Lon N-terminal domain. Position 355-362 (Gly355–Thr362) interacts with ATP. One can recognise a Lon proteolytic domain in the interval Lys591–Lys772. Catalysis depends on residues Ser678 and Lys721.

The protein belongs to the peptidase S16 family. In terms of assembly, homohexamer. Organized in a ring with a central cavity.

It localises to the cytoplasm. It catalyses the reaction Hydrolysis of proteins in presence of ATP.. In terms of biological role, ATP-dependent serine protease that mediates the selective degradation of mutant and abnormal proteins as well as certain short-lived regulatory proteins. Required for cellular homeostasis and for survival from DNA damage and developmental changes induced by stress. Degrades polypeptides processively to yield small peptide fragments that are 5 to 10 amino acids long. Binds to DNA in a double-stranded, site-specific manner. This chain is Lon protease, found in Brevibacillus choshinensis.